A 414-amino-acid chain; its full sequence is Serine hydroxymethyltransferase (414 aa).

Residues Leu-121 and 125-127 each bind (6S)-5,6,7,8-tetrahydrofolate; that span reads GHL. Lys-229 carries the N6-(pyridoxal phosphate)lysine modification.

The protein belongs to the SHMT family. As to quaternary structure, homodimer. Requires pyridoxal 5'-phosphate as cofactor.

Its subcellular location is the cytoplasm. It carries out the reaction (6R)-5,10-methylene-5,6,7,8-tetrahydrofolate + glycine + H2O = (6S)-5,6,7,8-tetrahydrofolate + L-serine. The protein operates within one-carbon metabolism; tetrahydrofolate interconversion. Its pathway is amino-acid biosynthesis; glycine biosynthesis; glycine from L-serine: step 1/1. Catalyzes the reversible interconversion of serine and glycine with tetrahydrofolate (THF) serving as the one-carbon carrier. This reaction serves as the major source of one-carbon groups required for the biosynthesis of purines, thymidylate, methionine, and other important biomolecules. Also exhibits THF-independent aldolase activity toward beta-hydroxyamino acids, producing glycine and aldehydes, via a retro-aldol mechanism. The chain is Serine hydroxymethyltransferase from Herminiimonas arsenicoxydans.